The chain runs to 287 residues: PPP2R1A-PPP2R2A-interacting phosphatase regulator 1 (287 aa).

The segment at 1 to 44 (MAQEKMELDLELPPGTGGSPAEGGGSGGGGGLRRSNSAPLIHGL) is disordered. Gly residues predominate over residues 15–32 (GTGGSPAEGGGSGGGGGL). Ser35 bears the Phosphoserine mark. Ser37 carries the post-translational modification Phosphoserine; by CHEK1. Position 45 is a phosphoserine (Ser45). A Phosphothreonine modification is found at Thr47. A phosphoserine mark is found at Ser48, Ser62, and Ser76. Residue Lys89 forms a Glycyl lysine isopeptide (Lys-Gly) (interchain with G-Cter in SUMO1) linkage. Phosphoserine occurs at positions 143 and 147. The residue at position 149 (Thr149) is a Phosphothreonine. Disordered regions lie at residues 167 to 189 (SNGLPPSPIPSPTTRFTTRRSQS) and 236 to 287 (GVCV…LSSK). 2 stretches are compositionally biased toward low complexity: residues 178-189 (PTTRFTTRRSQS) and 246-257 (GNSSSAGSSCNS). A phosphoserine mark is found at Ser187 and Ser189. Positions 259-270 (AKVSTTTDSPVS) are enriched in polar residues. 3 positions are modified to phosphoserine: Ser267, Ser270, and Ser276.

Belongs to the FAM122 family. Interacts with PPP2CA and PPP2R1A. Interacts (via its N-terminus) with PPP2R2A; the interaction is direct and this interaction inhibits PP2A activity. The CHEK1-mediated Ser-37 phosphorylated form interacts with 14-3-3 proteins. In terms of processing, CHEK1-mediated phosphorylation at Ser-37 negatively regulates its ability to inhibit serine/threonine-protein phosphatase 2A (PP2A) activity. Phosphorylation leads to its release from the PP2A complex and its sequestration by 14-3-3 proteins in the cytoplasm resulting in its inability to translocate to the nucleus, where it otherwise inhibits PP2A.

The protein localises to the nucleus. It localises to the cytoplasm. Functionally, acts as an inhibitor of serine/threonine-protein phosphatase 2A (PP2A) activity. Inhibits PP2A activity by blocking the substrate binding site on PPP2R2A and the active site of PPP2CA. Potentiates ubiquitin-mediated proteasomal degradation of serine/threonine-protein phosphatase 2A catalytic subunit alpha (PPP2CA). Inhibits PP2A-mediated dephosphorylation of WEE1, promoting ubiquitin-mediated proteolysis of WEE1, thereby releasing G2/M checkpoint. This Homo sapiens (Human) protein is PPP2R1A-PPP2R2A-interacting phosphatase regulator 1.